Consider the following 197-residue polypeptide: MIALLNGQLIEKTVSQVILDVGGVGYRLLIPLSTYYALPDEGDVRLRVHTHVREDALLLFGFLTETEKDLFGLLLSVSGVGPKVALNILSHLPAADLQQALSQGNAKHLATVPGIGKKTAERLVLELREKVGPVQAVPGNAPLPAETAGDLREDALSALVNLGYKENLSRKALDGIDTAPDAPLEDILKQALKLLMR.

Positions 1-63 (MIALLNGQLI…EDALLLFGFL (63 aa)) are domain I. The segment at 64-142 (TETEKDLFGL…PVQAVPGNAP (79 aa)) is domain II. Residues 142–146 (PLPAE) are flexible linker. Residues 147-197 (TAGDLREDALSALVNLGYKENLSRKALDGIDTAPDAPLEDILKQALKLLMR) are domain III.

Belongs to the RuvA family. In terms of assembly, homotetramer. Forms an RuvA(8)-RuvB(12)-Holliday junction (HJ) complex. HJ DNA is sandwiched between 2 RuvA tetramers; dsDNA enters through RuvA and exits via RuvB. An RuvB hexamer assembles on each DNA strand where it exits the tetramer. Each RuvB hexamer is contacted by two RuvA subunits (via domain III) on 2 adjacent RuvB subunits; this complex drives branch migration. In the full resolvosome a probable DNA-RuvA(4)-RuvB(12)-RuvC(2) complex forms which resolves the HJ.

Its subcellular location is the cytoplasm. The RuvA-RuvB-RuvC complex processes Holliday junction (HJ) DNA during genetic recombination and DNA repair, while the RuvA-RuvB complex plays an important role in the rescue of blocked DNA replication forks via replication fork reversal (RFR). RuvA specifically binds to HJ cruciform DNA, conferring on it an open structure. The RuvB hexamer acts as an ATP-dependent pump, pulling dsDNA into and through the RuvAB complex. HJ branch migration allows RuvC to scan DNA until it finds its consensus sequence, where it cleaves and resolves the cruciform DNA. This chain is Holliday junction branch migration complex subunit RuvA, found in Syntrophotalea carbinolica (strain DSM 2380 / NBRC 103641 / GraBd1) (Pelobacter carbinolicus).